A 270-amino-acid polypeptide reads, in one-letter code: Putative postmeiotic segregation increased 2-like protein 11 (270 aa).

The protein belongs to the DNA mismatch repair MutL/HexB family.

The sequence is that of Putative postmeiotic segregation increased 2-like protein 11 (PMS2P11) from Homo sapiens (Human).